Consider the following 165-residue polypeptide: MALNLQDKQAIVAEVSEVAKGALSAVVADSRGVTVDKMTELRKAGREAGVYMRVVRNTLMRRVVEGTPFECLKDTFVGPTLIAFSNEHPGAAARLFKAFAKDNANFEVKAAAFEGEVISASQIDRLATLPTYEEAIARLMSAMKEASAGKLVRTLAALRDQKEAA.

The protein belongs to the universal ribosomal protein uL10 family. Part of the ribosomal stalk of the 50S ribosomal subunit. The N-terminus interacts with L11 and the large rRNA to form the base of the stalk. The C-terminus forms an elongated spine to which L12 dimers bind in a sequential fashion forming a multimeric L10(L12)X complex.

In terms of biological role, forms part of the ribosomal stalk, playing a central role in the interaction of the ribosome with GTP-bound translation factors. In Sodalis glossinidius (strain morsitans), this protein is Large ribosomal subunit protein uL10.